The chain runs to 395 residues: Multidrug resistance protein MdtL (395 aa).

12 helical membrane-spanning segments follow: residues Phe-4–Val-24, Ile-42–Ala-62, Pro-69–Ser-89, Leu-93–Phe-113, Leu-131–Met-151, Ser-158–Leu-178, Val-217–Phe-237, Ala-247–Phe-267, Thr-271–His-291, Val-295–Met-315, Val-328–Ile-350, and Ala-355–Val-377.

Belongs to the major facilitator superfamily. DHA1 family. MdtL (TC 2.A.1.2.22) subfamily.

The protein resides in the cell inner membrane. In Salmonella newport (strain SL254), this protein is Multidrug resistance protein MdtL.